The following is a 72-amino-acid chain: General transcription factor IIH subunit 5 (72 aa).

The protein belongs to the TFB5 family. As to quaternary structure, component of the 7-subunit TFIIH core complex composed of XPB/repB, XPD/repD, gtf2h1, gtf2h2, gtf2h3, gtf2h4 and gtf2h5, which is active in NER. The core complex associates with the 3-subunit CDK-activating kinase (CAK) module composed of cycH/cyclin H, cdk7 and mnat1 to form the 10-subunit holoenzyme (holo-TFIIH) active in transcription.

It localises to the nucleus. Its function is as follows. Component of the general transcription and DNA repair factor IIH (TFIIH) core complex, which is involved in general and transcription-coupled nucleotide excision repair (NER) of damaged DNA and, when complexed to CAK, in RNA transcription by RNA polymerase II. In NER, TFIIH acts by opening DNA around the lesion to allow the excision of the damaged oligonucleotide and its replacement by a new DNA fragment. In transcription, TFIIH has an essential role in transcription initiation. When the pre-initiation complex (PIC) has been established, TFIIH is required for promoter opening and promoter escape. Phosphorylation of the C-terminal tail (CTD) of the largest subunit of RNA polymerase II by the kinase module CAK controls the initiation of transcription. The protein is General transcription factor IIH subunit 5 (gtf2h5) of Dictyostelium discoideum (Social amoeba).